The following is a 255-amino-acid chain: Borealin-2 (255 aa).

Disordered regions lie at residues 1–24 (MAPR…HSFE) and 107–156 (IQKP…STGS). Residues 124-135 (AGQQRSSSQSKT) are compositionally biased toward polar residues.

The protein belongs to the borealin family. Component of the CPC complex.

The protein resides in the nucleus. It localises to the chromosome. Its subcellular location is the centromere. Component of the chromosomal passenger complex (CPC), a complex that acts as a key regulator of mitosis. The CPC complex has essential functions at the centromere in ensuring correct chromosome alignment and segregation and is required for chromatin-induced microtubule stabilization and spindle assembly. This chain is Borealin-2 (cdca9), found in Danio rerio (Zebrafish).